The primary structure comprises 1128 residues: MAECGRGAAGGALPTSPSPALGAKGALKAGAGEGGGGGGGGRLGHGRARYDSGGVSNGDCSLGVSGDEARTSPGRGPLGVALARTPSPAAGPVPRDSKPGGLPRRSSIIKDGTKQKRERKKTVSFSSMPTEKKISSASDCINSMVEGSELKKVRSNSRIYHRYFLLDADMQSLRWEPSKKDSEKAKIDIKSIKEVRTGKNTDIFRSNGISEQISEDCAFSVIYGENYESLDLVANSADVANIWVTGLRYLISYGKHTLDMLESSQDNMRTSWISQMFSEIDVDGLGHITLCHAVQCIRNLNPGLKTSKIELKFKELHKSKDKAGTEITKEEFIEVFHELCTRPEIYFLLVQFSSNKEFLDTKDLMMFLEAEQGVAHINEEISLEIIHKYEPSKEGQEKGWLSIDGFTNYLMSPDCYIFDPEHKKVCQDMKQPLSHYFINSSHNTYLIEDQFRGPSDITGYIRALKMGCRSVELDVWDGPDNEPVIYTGHTMTSQIVFRSVIDIINKYAFFASEYPLILCLENHCSIKQQKVMVQHMKKILGDKLYTTSPNMEESYLPSPDVLKGKILIKAKKLSSNCSGVEGDVTDEDEGAEMSQRMGKENVEQPNHVPVKRFQLCKELSELVSICKSVQFKEFQVSFQVQKYWEVCSFNEVLASKYANENPGDFVNYNKRFLARVFPSPMRIDSSNMNPQDFWKCGCQIVAMNFQTPGLMMDLNVGWFRQNGNCGYVLRPAIMREEVSFFSANTKDSVPGVSPQLLHIKIISGQNFPKPKGSGAKGDVVDPYVYVEIHGIPADCAEQRTKTVNQNGDAPIFDESFEFQINLPELAMVRFVVLDDDYIGDEFIGQYTIPFECLQTGYRHVPLQSLTGEVLAHASLFVHVAITNRRGGGKPHKRGLSVRKGKKSREYASLRTLWIKTVDEVFKNAQPPIRDATDLRENMQNAVVSFKELCGLSSVANLMQCMLAVSPRFLGPDNNPLVVLNLSEPYPTMELQAIVPEVLKKIVTTYDMMMQSLKALIENADAVYEKIVHCQKAAMEFHEHLHSIGTKEGLKERKLQKAVESFTWNITILKGQADLLKYAKNETLENLKQIHFAAVSCGLNKPGTENSEAQKPRRSLEAIPEKASDENGD.

The tract at residues 1–129 is disordered; that stretch reads MAECGRGAAG…KKTVSFSSMP (129 aa). A2 carries the post-translational modification N-acetylalanine. Position 16 is a phosphoserine (S16). Residues 20-30 show a composition bias toward low complexity; sequence ALGAKGALKAG. Residues 31–43 are compositionally biased toward gly residues; sequence AGEGGGGGGGGRL. T85 is subject to Phosphothreonine. One can recognise a PH domain in the interval 142–252; that stretch reads NSMVEGSELK…WVTGLRYLIS (111 aa). The PI-PLC X-box domain maps to 427–571; that stretch reads QDMKQPLSHY…LKGKILIKAK (145 aa). T585 carries the phosphothreonine modification. The region spanning 619 to 735 is the PI-PLC Y-box domain; that stretch reads LSELVSICKS…GYVLRPAIMR (117 aa). Positions 735-864 constitute a C2 domain; that stretch reads REEVSFFSAN…TGYRHVPLQS (130 aa). Positions 1100 to 1128 are disordered; it reads KPGTENSEAQKPRRSLEAIPEKASDENGD. A compositionally biased stretch (basic and acidic residues) spans 1107-1128; sequence EAQKPRRSLEAIPEKASDENGD. The residue at position 1114 (S1114) is a Phosphoserine.

Ubiquitously expressed, with a strong expression in skeletal muscle.

It localises to the cytoplasm. May play an role in the regulation of Ins(1,4,5)P3 around the endoplasmic reticulum. In Mus musculus (Mouse), this protein is Inactive phospholipase C-like protein 2 (Plcl2).